We begin with the raw amino-acid sequence, 544 residues long: Fructose dehydrogenase large subunit (544 aa).

14 to 30 serves as a coordination point for FAD; that stretch reads GAGICGSLLAHKLVRNG. His-478 acts as the Proton acceptor in catalysis.

This sequence belongs to the GMC oxidoreductase family. Heterotrimer composed of FdhL, FdhS and FdhC. FAD serves as cofactor.

The protein localises to the cell membrane. It carries out the reaction keto-D-fructose + a ubiquinone = 5-dehydro-D-fructose + a ubiquinol. Its function is as follows. Catalytic subunit of fructose dehydrogenase, an enzyme that catalyzes the oxidation of D-fructose to produce 5-keto-D-fructose. The protein is Fructose dehydrogenase large subunit (fdhL) of Gluconobacter japonicus.